Here is a 932-residue protein sequence, read N- to C-terminus: 3-hydroxy-3-methylglutaryl-coenzyme A reductase (932 aa).

Helical transmembrane passes span 20-40, 59-79, 92-112, 113-133, 162-182, and 193-213; these read VIVC…FTGL, LSSD…YLYL, ILGI…SAVI, HLFG…LLLI, MAIL…VISI, and VFCC…MTFF. N-linked (GlcNAc...) asparagine glycosylation is present at Asn279. Residues 322-342 form a helical membrane-spanning segment; sequence ILTAILATVLASHYIFFSDLA. The interval 343-467 is linker; the sequence is TYPEKRVSIM…APRPMPELLE (125 aa). The span at 357-367 shows a compositional bias: basic and acidic residues; that stretch reads VVNPGSDHEDA. Positions 357 to 442 are disordered; it reads VVNPGSDHED…SGSEDEEEEV (86 aa). Residues 374–403 show a composition bias toward polar residues; sequence GTLSSSPSTSDVRVIESMTSRTQACQTDPV. Over residues 406–421 the composition is skewed to low complexity; the sequence is SPRNSRSSSPVSSHSV. Residues 468–932 are catalytic; the sequence is ILNVGKGPNA…APGTCTANAS (465 aa). Catalysis depends on charge relay system residues Glu575, Lys707, and Asp783. An N-linked (GlcNAc...) asparagine glycan is attached at Asn850. Residue His882 is the Proton donor of the active site. Asn886 carries an N-linked (GlcNAc...) asparagine glycan. Position 888 is a phosphoserine; by AMPK (Ser888).

Belongs to the HMG-CoA reductase family.

It is found in the endoplasmic reticulum membrane. It catalyses the reaction (R)-mevalonate + 2 NADP(+) + CoA = (3S)-3-hydroxy-3-methylglutaryl-CoA + 2 NADPH + 2 H(+). The protein operates within metabolic intermediate biosynthesis; (R)-mevalonate biosynthesis; (R)-mevalonate from acetyl-CoA: step 3/3. This transmembrane glycoprotein is involved in the control of cholesterol biosynthesis. It is the rate-limiting enzyme of sterol biosynthesis. The sequence is that of 3-hydroxy-3-methylglutaryl-coenzyme A reductase (HMGCR) from Strongylocentrotus purpuratus (Purple sea urchin).